The chain runs to 205 residues: Ribosomal RNA large subunit methyltransferase E (205 aa).

S-adenosyl-L-methionine-binding residues include G60, W62, D80, D96, and D121. Catalysis depends on K161, which acts as the Proton acceptor.

The protein belongs to the class I-like SAM-binding methyltransferase superfamily. RNA methyltransferase RlmE family.

The protein localises to the cytoplasm. The catalysed reaction is uridine(2552) in 23S rRNA + S-adenosyl-L-methionine = 2'-O-methyluridine(2552) in 23S rRNA + S-adenosyl-L-homocysteine + H(+). In terms of biological role, specifically methylates the uridine in position 2552 of 23S rRNA at the 2'-O position of the ribose in the fully assembled 50S ribosomal subunit. The polypeptide is Ribosomal RNA large subunit methyltransferase E (Dechloromonas aromatica (strain RCB)).